The chain runs to 146 residues: Hemoglobin subunit beta (146 aa).

N-acetylvaline is present on Val1. The Globin domain maps to 2–146; the sequence is HLTADEKAAV…VATALAHKYH (145 aa). At Ser44 the chain carries Phosphoserine. Lys59 carries the N6-acetyllysine modification. Heme b is bound at residue His63. Lys82 carries the post-translational modification N6-acetyllysine. His92 is a binding site for heme b. S-nitrosocysteine is present on Cys93. Lys144 carries the post-translational modification N6-acetyllysine.

This sequence belongs to the globin family. As to quaternary structure, heterotetramer of two alpha chains and two beta chains. As to expression, red blood cells.

Its function is as follows. Involved in oxygen transport from the lung to the various peripheral tissues. This Myotis velifer (Mouse-eared bat) protein is Hemoglobin subunit beta (HBB).